The chain runs to 138 residues: Putative pre-16S rRNA nuclease (138 aa).

It belongs to the YqgF nuclease family.

The protein localises to the cytoplasm. Could be a nuclease involved in processing of the 5'-end of pre-16S rRNA. The protein is Putative pre-16S rRNA nuclease of Flavobacterium johnsoniae (strain ATCC 17061 / DSM 2064 / JCM 8514 / BCRC 14874 / CCUG 350202 / NBRC 14942 / NCIMB 11054 / UW101) (Cytophaga johnsonae).